A 299-amino-acid polypeptide reads, in one-letter code: Probable lipid kinase YegS (299 aa).

The region spanning 2 to 133 (ANFPASLLIL…IDMARVNDKT (132 aa)) is the DAGKc domain. ATP-binding positions include T40, 66–72 (GDGTINE), and T95. The Mg(2+) site is built by L215, D218, and L220. E271 functions as the Proton acceptor in the catalytic mechanism.

This sequence belongs to the diacylglycerol/lipid kinase family. YegS lipid kinase subfamily. The cofactor is Mg(2+). Requires Ca(2+) as cofactor.

It localises to the cytoplasm. Probably phosphorylates lipids; the in vivo substrate is unknown. This is Probable lipid kinase YegS from Salmonella paratyphi A (strain ATCC 9150 / SARB42).